The sequence spans 529 residues: MKKIYNVYFLCGFATLGGGLFGFDISSMSGVLGTAAYTNYFQVGSGQYKQGSITCAMPFGSLVGALCSSFIADRYSRVRAIQFSSILWIIGSIFMCASNGIPLLVVGRVIAGGCVGIASAMVPVYQAEIAPKEIRGRVISLQQWAITWGILIQYFIQYGASNIDGGPNNPTQSTAAFRIPWGIQIVPGVILFFGMFLFPKSPRWLASKDRWEEALQVLSKLHGQGDVNHPKVLAEYKEIQEALALEREQSATGFQELIKPRIFKRVILGMSLQMWSQLCGMNVMMYYIVYIMQSTGAGSPLLTASIQYILNTALTLPAIIYLDKFGRRPAILIGFFLQAIFLYLEGGLQGGFGAPNPHTDPKLDAISWTVADHPAVGKAIIALSYLFVCSFATTIGPTSWTYPAEIYPAKVRAKAVSLATASNWIWNCLLALFVPPLLWSINWKMYMIFAAFNTAAFIHMFLTAPETKGYTLEEMDDVFDSGLPAWRKLERKSRMEELEKEIIEGNLKITPAHEATGVSATHVTPEKQV.

The next 12 helical transmembrane spans lie at 7–27, 52–72, 86–106, 109–129, 138–158, 179–199, 272–292, 301–321, 330–350, 375–395, 415–439, and 446–464; these read VYFLCGFATLGGGLFGFDISS, SITCAMPFGSLVGALCSSFIA, ILWIIGSIFMCASNGIPLLVV, VIAGGCVGIASAMVPVYQAEI, VISLQQWAITWGILIQYFIQY, IPWGIQIVPGVILFFGMFLFP, LQMWSQLCGMNVMMYYIVYIM, LLTASIQYILNTALTLPAIIY, AILIGFFLQAIFLYLEGGLQG, AVGKAIIALSYLFVCSFATTI, AVSLATASNWIWNCLLALFVPPLLW, and YMIFAAFNTAAFIHMFLTA.

This sequence belongs to the major facilitator superfamily. Sugar transporter (TC 2.A.1.1) family.

The protein localises to the membrane. Functionally, probable MFS glucose transporter; part of the gene cluster 27 that mediates the biosynthesis of asparasone A, a sclerotium-specific anthraquinone pigment important for sclerotial survival. This is MFS glucose transporter mfs1 from Aspergillus flavus (strain ATCC 200026 / FGSC A1120 / IAM 13836 / NRRL 3357 / JCM 12722 / SRRC 167).